The chain runs to 434 residues: Protein ENHANCED PSEUDOMONAS SUSCEPTIBILITY 1 (434 aa).

Residue aspartate 376 is the Proton acceptor of the active site.

The protein belongs to the plant acyltransferase family.

Functionally, required for pathogen-induced salicylic acid (SA) accumulation and SA-mediated resistance to virulent and avirulent pathogens (e.g. P.syringae). This is Protein ENHANCED PSEUDOMONAS SUSCEPTIBILITY 1 from Arabidopsis thaliana (Mouse-ear cress).